The chain runs to 134 residues: Histone H2B (134 aa).

Residues 1–10 (MSDKASTPKK) are compositionally biased toward polar residues. 2 disordered regions span residues 1–29 (MSDK…EAKK) and 113–134 (VSEG…SKSR). Basic and acidic residues predominate over residues 12 to 29 (ATKDATKPKKVGDEEAKK). Positions 125 to 134 (GQPTSGSKSR) are enriched in polar residues.

Belongs to the histone H2B family. In terms of assembly, the nucleosome is a histone octamer containing two molecules each of H2A, H2B, H3 and H4 assembled in one H3-H4 heterotetramer and two H2A-H2B heterodimers. The octamer wraps approximately 147 bp of DNA.

Its subcellular location is the nucleus. It is found in the chromosome. Functionally, core component of nucleosome. Nucleosomes wrap and compact DNA into chromatin, limiting DNA accessibility to the cellular machineries which require DNA as a template. Histones thereby play a central role in transcription regulation, DNA repair, DNA replication and chromosomal stability. DNA accessibility is regulated via a complex set of post-translational modifications of histones, also called histone code, and nucleosome remodeling. The sequence is that of Histone H2B from Entamoeba invadens.